A 416-amino-acid polypeptide reads, in one-letter code: Probable carboxypeptidase An18g06210 (416 aa).

Residues 1–16 form the signal peptide; it reads MKSPISLLAAVGVASA. N-linked (GlcNAc...) asparagine glycans are attached at residues asparagine 54, asparagine 70, and asparagine 129. Zn(2+) is bound at residue aspartate 142. The Proton acceptor role is filled by glutamate 174. Glutamate 175 contributes to the Zn(2+) binding site. Asparagine 187 and asparagine 319 each carry an N-linked (GlcNAc...) asparagine glycan.

It belongs to the peptidase M20A family. It depends on Zn(2+) as a cofactor.

It localises to the secreted. The protein is Probable carboxypeptidase An18g06210 of Aspergillus niger (strain ATCC MYA-4892 / CBS 513.88 / FGSC A1513).